We begin with the raw amino-acid sequence, 239 residues long: Purine nucleoside phosphorylase DeoD-type 1 (239 aa).

His-5 serves as a coordination point for a purine D-ribonucleoside. Residues Gly-21, Arg-25, Arg-44, and 88-91 each bind phosphate; that span reads RVGS. Residues 180 to 182 and 204 to 205 contribute to the a purine D-ribonucleoside site; these read EME and SD. Residue Asp-205 is the Proton donor of the active site.

The protein belongs to the PNP/UDP phosphorylase family. In terms of assembly, homohexamer; trimer of homodimers.

The catalysed reaction is a purine D-ribonucleoside + phosphate = a purine nucleobase + alpha-D-ribose 1-phosphate. It carries out the reaction a purine 2'-deoxy-D-ribonucleoside + phosphate = a purine nucleobase + 2-deoxy-alpha-D-ribose 1-phosphate. Its function is as follows. Catalyzes the reversible phosphorolytic breakdown of the N-glycosidic bond in the beta-(deoxy)ribonucleoside molecules, with the formation of the corresponding free purine bases and pentose-1-phosphate. In Vibrio vulnificus (strain CMCP6), this protein is Purine nucleoside phosphorylase DeoD-type 1.